Consider the following 135-residue polypeptide: Small ribosomal subunit protein uS11 (135 aa).

The protein belongs to the universal ribosomal protein uS11 family. As to quaternary structure, part of the 30S ribosomal subunit. Interacts with proteins S7 and S18. Binds to IF-3.

Located on the platform of the 30S subunit, it bridges several disparate RNA helices of the 16S rRNA. Forms part of the Shine-Dalgarno cleft in the 70S ribosome. In Corynebacterium urealyticum (strain ATCC 43042 / DSM 7109), this protein is Small ribosomal subunit protein uS11.